The primary structure comprises 102 residues: Putative pterin-4-alpha-carbinolamine dehydratase (102 aa).

Belongs to the pterin-4-alpha-carbinolamine dehydratase family.

It catalyses the reaction (4aS,6R)-4a-hydroxy-L-erythro-5,6,7,8-tetrahydrobiopterin = (6R)-L-erythro-6,7-dihydrobiopterin + H2O. This Burkholderia ambifaria (strain MC40-6) protein is Putative pterin-4-alpha-carbinolamine dehydratase.